The chain runs to 67 residues: Conotoxin Cp1.1 (67 aa).

A signal peptide spans M1–T26. 4 disulfide bridges follow: C29-C43, C36-C48, C42-C52, and C47-C56. Tyrosine amide is present on Y60. Positions A64–Q67 are excised as a propeptide.

Belongs to the conotoxin I2 superfamily. In terms of tissue distribution, expressed by the venom duct.

It localises to the secreted. The polypeptide is Conotoxin Cp1.1 (Conus capitaneus (Captain cone)).